The sequence spans 236 residues: Putative (5-formylfuran-3-yl)methyl phosphate synthase (236 aa).

The Schiff-base intermediate with substrate role is filled by K38. K94 acts as the Proton acceptor in catalysis.

Belongs to the MfnB family.

It catalyses the reaction 2 D-glyceraldehyde 3-phosphate = 4-(hydroxymethyl)-2-furancarboxaldehyde phosphate + phosphate + 2 H2O. Catalyzes the formation of 4-(hydroxymethyl)-2-furancarboxaldehyde phosphate (4-HFC-P) from two molecules of glyceraldehyde-3-P (GA-3-P). This chain is Putative (5-formylfuran-3-yl)methyl phosphate synthase, found in Methylorubrum extorquens (Methylobacterium dichloromethanicum).